The sequence spans 285 residues: Ribose-phosphate pyrophosphokinase (285 aa).

Residues 34-36 and 91-92 contribute to the ATP site; these read DGE and RQ. Residues histidine 124 and aspartate 162 each coordinate Mg(2+). Residue lysine 185 is part of the active site. D-ribose 5-phosphate is bound by residues arginine 187, aspartate 211, and 215 to 219; that span reads STGGT.

It belongs to the ribose-phosphate pyrophosphokinase family. Class III (archaeal) subfamily. It depends on Mg(2+) as a cofactor.

The protein resides in the cytoplasm. It catalyses the reaction D-ribose 5-phosphate + ATP = 5-phospho-alpha-D-ribose 1-diphosphate + AMP + H(+). It functions in the pathway metabolic intermediate biosynthesis; 5-phospho-alpha-D-ribose 1-diphosphate biosynthesis; 5-phospho-alpha-D-ribose 1-diphosphate from D-ribose 5-phosphate (route I): step 1/1. Functionally, involved in the biosynthesis of the central metabolite phospho-alpha-D-ribosyl-1-pyrophosphate (PRPP) via the transfer of pyrophosphoryl group from ATP to 1-hydroxyl of ribose-5-phosphate (Rib-5-P). This Pyrococcus abyssi (strain GE5 / Orsay) protein is Ribose-phosphate pyrophosphokinase.